The following is a 210-amino-acid chain: Somatotropin-2 (210 aa).

Positions 1–22 (MARALVLLSVVLVSLLVNQGRA) are cleaved as a signal peptide. H38 is a binding site for Zn(2+). A disulfide bridge links C71 with C183. E192 contributes to the Zn(2+) binding site. Residues C200 and C208 are joined by a disulfide bond.

The protein belongs to the somatotropin/prolactin family.

It is found in the secreted. In terms of biological role, growth hormone plays an important role in growth control and is involved in the regulation of several anabolic processes. Implicated as an osmoregulatory substance important for seawater adaptation. The sequence is that of Somatotropin-2 (gh2) from Carassius auratus (Goldfish).